The following is a 300-amino-acid chain: Bifunctional protein FolD (300 aa).

Residues 168-170, serine 193, and isoleucine 234 contribute to the NADP(+) site; that span reads GRS.

This sequence belongs to the tetrahydrofolate dehydrogenase/cyclohydrolase family. As to quaternary structure, homodimer.

It carries out the reaction (6R)-5,10-methylene-5,6,7,8-tetrahydrofolate + NADP(+) = (6R)-5,10-methenyltetrahydrofolate + NADPH. The catalysed reaction is (6R)-5,10-methenyltetrahydrofolate + H2O = (6R)-10-formyltetrahydrofolate + H(+). Its pathway is one-carbon metabolism; tetrahydrofolate interconversion. Its function is as follows. Catalyzes the oxidation of 5,10-methylenetetrahydrofolate to 5,10-methenyltetrahydrofolate and then the hydrolysis of 5,10-methenyltetrahydrofolate to 10-formyltetrahydrofolate. In Ehrlichia ruminantium (strain Welgevonden), this protein is Bifunctional protein FolD.